We begin with the raw amino-acid sequence, 218 residues long: MQDLAAIAYLTLGIAIVGGYLLGSIPFGLIATRLGGAGDIRQIGSGNIGATNVLRSGRKDLAAITLLGDAGKGVVAVLLARYLTNGNPAIIALAGGSAFLGHLFPVWLKFKGGKGVATFYGVLLSAAWPVGVAAGATWLAMAFLFRISSLAALTAAVLAAPFALAFDQPYPFMGLCLFMAVLIFIRHRENIARLLKGEEPKIGKKKPAEEAPPAPDAP.

5 helical membrane passes run 10 to 30, 60 to 80, 88 to 108, 125 to 145, and 165 to 185; these read LTLGIAIVGGYLLGSIPFGLI, DLAAITLLGDAGKGVVAVLLA, PAIIALAGGSAFLGHLFPVWL, SAAWPVGVAAGATWLAMAFLF, and AFDQPYPFMGLCLFMAVLIFI.

This sequence belongs to the PlsY family. As to quaternary structure, probably interacts with PlsX.

It is found in the cell inner membrane. It catalyses the reaction an acyl phosphate + sn-glycerol 3-phosphate = a 1-acyl-sn-glycero-3-phosphate + phosphate. Its pathway is lipid metabolism; phospholipid metabolism. Catalyzes the transfer of an acyl group from acyl-phosphate (acyl-PO(4)) to glycerol-3-phosphate (G3P) to form lysophosphatidic acid (LPA). This enzyme utilizes acyl-phosphate as fatty acyl donor, but not acyl-CoA or acyl-ACP. This Caulobacter vibrioides (strain ATCC 19089 / CIP 103742 / CB 15) (Caulobacter crescentus) protein is Glycerol-3-phosphate acyltransferase.